Here is a 356-residue protein sequence, read N- to C-terminus: tRNA N6-adenosine threonylcarbamoyltransferase (356 aa).

Fe cation is bound by residues His-131 and His-135. Substrate contacts are provided by residues 154-158 (LVSGG), Asp-187, Gly-200, and Asn-289. Asp-317 contacts Fe cation.

It belongs to the KAE1 / TsaD family. Fe(2+) is required as a cofactor.

The protein localises to the cytoplasm. It catalyses the reaction L-threonylcarbamoyladenylate + adenosine(37) in tRNA = N(6)-L-threonylcarbamoyladenosine(37) in tRNA + AMP + H(+). In terms of biological role, required for the formation of a threonylcarbamoyl group on adenosine at position 37 (t(6)A37) in tRNAs that read codons beginning with adenine. Is involved in the transfer of the threonylcarbamoyl moiety of threonylcarbamoyl-AMP (TC-AMP) to the N6 group of A37, together with TsaE and TsaB. TsaD likely plays a direct catalytic role in this reaction. The polypeptide is tRNA N6-adenosine threonylcarbamoyltransferase (Ruthia magnifica subsp. Calyptogena magnifica).